A 492-amino-acid chain; its full sequence is Catalase isozyme 1 (492 aa).

Residues His65 and Asn138 contribute to the active site. Tyr348 is a binding site for heme.

It belongs to the catalase family. As to quaternary structure, homotetramer. The cofactor is heme.

The protein resides in the peroxisome. The protein localises to the glyoxysome. The catalysed reaction is 2 H2O2 = O2 + 2 H2O. In terms of biological role, occurs in almost all aerobically respiring organisms and serves to protect cells from the toxic effects of hydrogen peroxide. The protein is Catalase isozyme 1 (CAT1) of Solanum tuberosum (Potato).